A 329-amino-acid polypeptide reads, in one-letter code: ATP-dependent (S)-NAD(P)H-hydrate dehydratase (329 aa).

The YjeF C-terminal domain maps to 35–326 (TLQLVRNIIP…AEVGAAFSKL (292 aa)). A Phosphotyrosine modification is found at Y67. (6S)-NADPHX contacts are provided by residues G135 and 188–194 (NHMEFSR). 2 N-linked (GlcNAc...) asparagine glycosylation sites follow: N207 and N222. ATP contacts are provided by residues 228-232 (KGERD) and 247-256 (GSSRRCGGQG). Position 257 (D257) interacts with (6S)-NADPHX. A glycan (N-linked (GlcNAc...) asparagine) is linked at N279.

Belongs to the NnrD/CARKD family. Mg(2+) serves as cofactor.

It localises to the mitochondrion. It carries out the reaction (6S)-NADHX + ATP = ADP + phosphate + NADH + H(+). It catalyses the reaction (6S)-NADPHX + ATP = ADP + phosphate + NADPH + H(+). Functionally, catalyzes the dehydration of the S-form of NAD(P)HX at the expense of ATP, which is converted to ADP. Together with NAD(P)HX epimerase, which catalyzes the epimerization of the S- and R-forms, the enzyme allows the repair of both epimers of NAD(P)HX, a damaged form of NAD(P)H that is a result of enzymatic or heat-dependent hydration. In Pongo abelii (Sumatran orangutan), this protein is ATP-dependent (S)-NAD(P)H-hydrate dehydratase.